We begin with the raw amino-acid sequence, 120 residues long: Large ribosomal subunit protein uL22 (120 aa).

This sequence belongs to the universal ribosomal protein uL22 family. Part of the 50S ribosomal subunit.

This protein binds specifically to 23S rRNA; its binding is stimulated by other ribosomal proteins, e.g. L4, L17, and L20. It is important during the early stages of 50S assembly. It makes multiple contacts with different domains of the 23S rRNA in the assembled 50S subunit and ribosome. In terms of biological role, the globular domain of the protein is located near the polypeptide exit tunnel on the outside of the subunit, while an extended beta-hairpin is found that lines the wall of the exit tunnel in the center of the 70S ribosome. The sequence is that of Large ribosomal subunit protein uL22 from Corynebacterium kroppenstedtii (strain DSM 44385 / JCM 11950 / CIP 105744 / CCUG 35717).